Reading from the N-terminus, the 394-residue chain is Protein DDI1 homolog 2 (394 aa).

A Ubiquitin-like domain is found at 1 to 81; sequence MLITVYCVRR…VILRQRETPE (81 aa). Positions 82-128 are disordered; that stretch reads ARPAAPFPGLDFSTIAVPGSSSQPAPSQPQAPPPPPPDTSSFPQGLD. Residues 107–119 show a composition bias toward pro residues; it reads PSQPQAPPPPPPD. The active site involves Asp247. The short motif at 371-390 is the Ubiquitin-binding element; the sequence is EEIADRELAEVLQKSAEEAD.

Belongs to the DDI1 family. Homodimer.

The protein localises to the cytoplasm. The protein resides in the cytosol. It is found in the chromosome. In terms of biological role, aspartic protease that mediates the cleavage of NFE2L1/NRF1 at 'Leu-104', thereby promoting release of NFE2L1/NRF1 from the endoplasmic reticulum membrane. Ubiquitination of NFE2L1/NRF1 is a prerequisite for cleavage, suggesting that DDI2 specifically recognizes and binds ubiquitinated NFE2L1/NRF1. Seems to act as a proteasomal shuttle which links the proteasome and replication fork proteins like RTF2. Required for cellular survival following replication stress. This chain is Protein DDI1 homolog 2 (ddi2), found in Xenopus tropicalis (Western clawed frog).